Consider the following 870-residue polypeptide: Linoleate 9S-lipoxygenase 2 (870 aa).

Positions 32-158 (NDFGATVIDG…KYRYNRVFFS (127 aa)) constitute a PLAT domain. The region spanning 161 to 870 (TSLPSKMPAA…ARGIPNSISI (710 aa)) is the Lipoxygenase domain. The disordered stretch occupies residues 203-243 (YNDLGEPDSGNPRPVLGGSPDRPYPRRGRTGRKPTKTDPTA). The segment covering 227-236 (PRRGRTGRKP) has biased composition (basic residues). Fe cation-binding residues include His-525, His-530, His-716, Asn-720, and Ile-870.

It belongs to the lipoxygenase family. In terms of assembly, monomer. It depends on Fe cation as a cofactor.

It localises to the cytoplasm. The catalysed reaction is (9Z,12Z)-octadecadienoate + O2 = (9S)-hydroperoxy-(10E,12Z)-octadecadienoate. Its pathway is lipid metabolism; oxylipin biosynthesis. Its function is as follows. Plant lipoxygenase may be involved in a number of diverse aspects of plant physiology including growth and development, pest resistance, and senescence or responses to wounding. Catalyzes the hydroperoxidation of lipids containing a cis,cis-1,4-pentadiene structure. The polypeptide is Linoleate 9S-lipoxygenase 2 (LOX1.1) (Oryza sativa subsp. japonica (Rice)).